Reading from the N-terminus, the 266-residue chain is MAKSLFRALVALSFLAPLWLNAAPRVITLSPANTELAFAAGITPVGVSSYSDYPLQAQKIEQVSTWQGMNLERIVALKPDLVIAWRGGNAERQVDQLASLGIKVMWVDATSIEQIANALRQLAPWSPQPDKAEQAAQSLLDQYAQLKAQYADKPKKRVFLQFGINPPFTSGKESIQNQVLEVCGGENIFKDSRVPWPQVSREQVLARSPQAIVITGGPDQIPKIKQYWGEQLKIPVIPLTSDWFERASPRIILAAQQLCNALSQVD.

Positions 1 to 22 (MAKSLFRALVALSFLAPLWLNA) are cleaved as a signal peptide. A Fe/B12 periplasmic-binding domain is found at 25–266 (RVITLSPANT…QLCNALSQVD (242 aa)). Cyanocob(III)alamin contacts are provided by residues Tyr50 and 242 to 246 (DWFER). A disulfide bridge links Cys183 with Cys259.

This sequence belongs to the BtuF family. The complex is composed of two ATP-binding proteins (BtuD), two transmembrane proteins (BtuC) and a solute-binding protein (BtuF).

It localises to the periplasm. Its function is as follows. Part of the ABC transporter complex BtuCDF involved in vitamin B12 import. Binds vitamin B12 and delivers it to the periplasmic surface of BtuC. This chain is Vitamin B12-binding protein, found in Escherichia coli O6:H1 (strain CFT073 / ATCC 700928 / UPEC).